We begin with the raw amino-acid sequence, 1450 residues long: ABC transporter G family member 37 (1450 aa).

The ABC transporter 1 domain maps to 158–431 (GNALHILPNK…FEFMGFRCPA (274 aa)). ATP is bound at residue 191-198 (GPPGSGKT). In terms of domain architecture, ABC transmembrane type-2 1 spans 509 to 721 (ELLKATIDRE…AQNAISTNEF (213 aa)). A run of 6 helical transmembrane segments spans residues 527–547 (FMYIFKAVNLTLMALIVMTTF), 559–579 (GMIYLGALYFALDTVMFNGFA), 614–634 (IPITFLEVGVYVFITYYVIGF), 646–666 (LLLLALNQMSSALFRFIAGIG), 670–690 (VVSHTFGPLSLLAFAALGGFI), and 756–776 (IGLGALLGYTLLFNLLYTVAL). The 253-residue stretch at 852-1104 (ISFNDVRYSV…KLIEYFEGID (253 aa)) folds into the ABC transporter 2 domain. An ATP-binding site is contributed by 897–904 (GVSGAGKT). Positions 1177–1391 (TQCLACLWKQ…TLYGLVASQF (215 aa)) constitute an ABC transmembrane type-2 2 domain. A run of 7 helical transmembrane segments spans residues 1198–1218 (AVRLLFTIVIALMFGTMFWNL), 1236–1256 (YAAVLYIGVQNSGSVQPVVVV), 1284–1304 (LPYIMVQTLIYGVLVYSMIGF), 1311–1331 (FLWYLFFMYFTLLYFTFYGMM), 1341–1361 (IAAIISSAFYNVWNLFSGYLI), 1372–1392 (WYCWICPVAWTLYGLVASQFG), and 1422–1442 (VVAVVHVVFAVTFAFLFSFAI).

The protein belongs to the ABC transporter superfamily. ABCG family. PDR (TC 3.A.1.205) subfamily.

It is found in the membrane. In terms of biological role, may be a general defense protein. In Oryza sativa subsp. japonica (Rice), this protein is ABC transporter G family member 37.